The sequence spans 615 residues: Dihydroxy-acid dehydratase (615 aa).

Aspartate 83 is a Mg(2+) binding site. Cysteine 124 is a [2Fe-2S] cluster binding site. 2 residues coordinate Mg(2+): aspartate 125 and lysine 126. N6-carboxylysine is present on lysine 126. Cysteine 199 provides a ligand contact to [2Fe-2S] cluster. Glutamate 495 provides a ligand contact to Mg(2+). Serine 521 (proton acceptor) is an active-site residue.

The protein belongs to the IlvD/Edd family. In terms of assembly, homodimer. It depends on [2Fe-2S] cluster as a cofactor. Mg(2+) serves as cofactor.

It carries out the reaction (2R)-2,3-dihydroxy-3-methylbutanoate = 3-methyl-2-oxobutanoate + H2O. The catalysed reaction is (2R,3R)-2,3-dihydroxy-3-methylpentanoate = (S)-3-methyl-2-oxopentanoate + H2O. It functions in the pathway amino-acid biosynthesis; L-isoleucine biosynthesis; L-isoleucine from 2-oxobutanoate: step 3/4. The protein operates within amino-acid biosynthesis; L-valine biosynthesis; L-valine from pyruvate: step 3/4. Functions in the biosynthesis of branched-chain amino acids. Catalyzes the dehydration of (2R,3R)-2,3-dihydroxy-3-methylpentanoate (2,3-dihydroxy-3-methylvalerate) into 2-oxo-3-methylpentanoate (2-oxo-3-methylvalerate) and of (2R)-2,3-dihydroxy-3-methylbutanoate (2,3-dihydroxyisovalerate) into 2-oxo-3-methylbutanoate (2-oxoisovalerate), the penultimate precursor to L-isoleucine and L-valine, respectively. In Corynebacterium jeikeium (strain K411), this protein is Dihydroxy-acid dehydratase.